The following is a 355-amino-acid chain: MEIEILSLFPDYFDSPLRSSILGKAIKNGLLKIQSRDIRDFGLGKWKQVDDAPFNNDGMLLMAEPVVQAIRHIKRSDSRVIHLSPQGKPLTAQKSRELAKCSHLIFLCGHYEGIDERALESEVDEEISIGDYVLTNGGIAALVVIDALSRFIPGVLGNQESAEKDSLENGLLEGPQYTRPRVFEGKEVPEVLLQGDHQAVARWRKQVSLDRTRERRPDLYIRYLYDRENEEVFPREEDTKQSTLEGESAVVLEVEDLQRSRKFYSKMFRLNQPSKDKLQIPGRTQMVLHLQEVGLKNKNTAILSLRLDCEDDFFSFLGRWKMLGGTLEQADDHGTVRLVRDFDGHQWTISYKKVK.

S-adenosyl-L-methionine is bound by residues Gly-109 and 129 to 134 (IGDYVL).

Belongs to the RNA methyltransferase TrmD family. Homodimer.

The protein localises to the cytoplasm. The enzyme catalyses guanosine(37) in tRNA + S-adenosyl-L-methionine = N(1)-methylguanosine(37) in tRNA + S-adenosyl-L-homocysteine + H(+). Its function is as follows. Specifically methylates guanosine-37 in various tRNAs. The polypeptide is tRNA (guanine-N(1)-)-methyltransferase (Chlamydia caviae (strain ATCC VR-813 / DSM 19441 / 03DC25 / GPIC) (Chlamydophila caviae)).